The chain runs to 388 residues: Tryptophan synthase beta chain (388 aa).

Lys-86 carries the N6-(pyridoxal phosphate)lysine modification.

This sequence belongs to the TrpB family. As to quaternary structure, tetramer of two alpha and two beta chains. Pyridoxal 5'-phosphate is required as a cofactor.

The enzyme catalyses (1S,2R)-1-C-(indol-3-yl)glycerol 3-phosphate + L-serine = D-glyceraldehyde 3-phosphate + L-tryptophan + H2O. The protein operates within amino-acid biosynthesis; L-tryptophan biosynthesis; L-tryptophan from chorismate: step 5/5. In terms of biological role, the beta subunit is responsible for the synthesis of L-tryptophan from indole and L-serine. The sequence is that of Tryptophan synthase beta chain (trpB) from Buchnera aphidicola subsp. Acyrthosiphon pisum (strain APS) (Acyrthosiphon pisum symbiotic bacterium).